The sequence spans 243 residues: Small ribosomal subunit protein eS4 (243 aa).

The 63-residue stretch at 43-105 folds into the S4 RNA-binding domain; that stretch reads IPLLYIVRDY…TGEHYRVLPN (63 aa).

This sequence belongs to the eukaryotic ribosomal protein eS4 family. In terms of assembly, part of the 30S ribosomal subunit.

The sequence is that of Small ribosomal subunit protein eS4 from Pyrococcus furiosus (strain ATCC 43587 / DSM 3638 / JCM 8422 / Vc1).